Reading from the N-terminus, the 590-residue chain is V-type ATP synthase alpha chain (590 aa).

232-239 is an ATP binding site; it reads GPFGSGKT.

Belongs to the ATPase alpha/beta chains family.

It catalyses the reaction ATP + H2O + 4 H(+)(in) = ADP + phosphate + 5 H(+)(out). Produces ATP from ADP in the presence of a proton gradient across the membrane. The V-type alpha chain is a catalytic subunit. The chain is V-type ATP synthase alpha chain from Thermoanaerobacter sp. (strain X514).